The chain runs to 163 residues: RNA pyrophosphohydrolase (163 aa).

The Nudix hydrolase domain maps to 6–149 (GYRLNVGIVI…KRDVYRQVMK (144 aa)). The Nudix box motif lies at 38–59 (GGIHLTESPEEAMYRELFEELG).

This sequence belongs to the Nudix hydrolase family. RppH subfamily. It depends on a divalent metal cation as a cofactor.

Its function is as follows. Accelerates the degradation of transcripts by removing pyrophosphate from the 5'-end of triphosphorylated RNA, leading to a more labile monophosphorylated state that can stimulate subsequent ribonuclease cleavage. This chain is RNA pyrophosphohydrolase, found in Hamiltonella defensa subsp. Acyrthosiphon pisum (strain 5AT).